The primary structure comprises 263 residues: Kallikrein 1-related peptidase b27 (263 aa).

The signal sequence occupies residues 1-17; the sequence is MRFLILFLALSLGGIDA. Residues 18 to 24 constitute a propeptide, activation peptide; sequence APPVQSR. The 236-residue stretch at 25 to 260 folds into the Peptidase S1 domain; sequence IIGGFKCKKN…FTSWIKDTMA (236 aa). 5 disulfides stabilise this stretch: Cys-31-Cys-175, Cys-50-Cys-66, Cys-154-Cys-221, Cys-186-Cys-200, and Cys-211-Cys-236. Catalysis depends on His-65, which acts as the Charge relay system. N-linked (GlcNAc...) asparagine glycans are attached at residues Asn-69 and Asn-105. Asp-122 acts as the Charge relay system in catalysis. Residue Ser-215 is the Charge relay system of the active site.

Belongs to the peptidase S1 family. Kallikrein subfamily. In terms of tissue distribution, expressed in testis and submaxillary gland. Not expressed in heart, brain, spleen, lung, liver, muscle, kidney and ovary. In the testis, expression localized specifically to Leydig cells in the interstitial tissues.

With respect to regulation, strongly inhibited by protease inhibitors diisopropyl fluorophosphate, phenylmethanesulfonyl fluoride and SBTI. Functionally, serine protease with chymotrypsin-like cleavage specificity. Shows activity towards casein, gelatin, IGFBP3 and fibronectin but not towards laminin or collagens I and IV. Does not hydrolyze kininogin to release Lys-bradykinin. The chain is Kallikrein 1-related peptidase b27 (Klk1b27) from Mus musculus (Mouse).